We begin with the raw amino-acid sequence, 656 residues long: Chaperone protein DnaK (656 aa).

Disordered stretches follow at residues 488–532 (EMQE…DAVD) and 579–656 (YQQQ…DEDE). Over residues 492-513 (EAEKHAEEDEKRRERIEARNEA) the composition is skewed to basic and acidic residues. Positions 523–532 (LLDENEDAVD) are enriched in acidic residues. A compositionally biased stretch (gly residues) spans 584 to 635 (GEGGAGAGAGAAGGMGGAGPGGMGGAGPGGMGGAGPGGMGGAGPGAGAGQQG). The segment covering 636-656 (DGEEFVDADFEDVDDEDDEDE) has biased composition (acidic residues).

The protein belongs to the heat shock protein 70 family.

In terms of biological role, acts as a chaperone. The polypeptide is Chaperone protein DnaK (Natronomonas pharaonis (strain ATCC 35678 / DSM 2160 / CIP 103997 / JCM 8858 / NBRC 14720 / NCIMB 2260 / Gabara) (Halobacterium pharaonis)).